The sequence spans 104 residues: DNA-directed RNA polymerase subunit omega (104 aa).

It belongs to the RNA polymerase subunit omega family. As to quaternary structure, the RNAP catalytic core consists of 2 alpha, 1 beta, 1 beta' and 1 omega subunit. When a sigma factor is associated with the core the holoenzyme is formed, which can initiate transcription.

It catalyses the reaction RNA(n) + a ribonucleoside 5'-triphosphate = RNA(n+1) + diphosphate. Promotes RNA polymerase assembly. Latches the N- and C-terminal regions of the beta' subunit thereby facilitating its interaction with the beta and alpha subunits. In Streptococcus pyogenes serotype M1, this protein is DNA-directed RNA polymerase subunit omega (rpoZ).